The following is a 335-amino-acid chain: MEITKTLGEFIVDHQNQYPTATGELSALFSSIRLAGKIVHREVNKAGLADIRGAAGGDNIQGEAQQKLDVYANEKFKAALSARGVVCGLASEEEDSFVAFDGQRSLQGKYVVLIDPLDGSSNIDVNVSVGTIFSIYRRISKTGGPVTLEDFLQPGRAQVAAGYIVYGSSTMLVYSTGDGVNGFTYDPSLGVFCLSHENMRCPPEGNIYSVNEGNYVHFPSGIKKYIKFCQEEDKPSGRPYTSRYIGSLVSDFHRNLIKGGIYLYPTSSTYPSGKLRLLYECNPMAFLAEQAGGKALAGVNQPVLDIVPSELHQRSPLIIGSSRMVDKACEFLSEK.

Residues E92, D115, L117, and D118 each contribute to the Mg(2+) site. Residues 118–121, N211, Y244, 262–264, and K274 contribute to the substrate site; these read DGSS and YLY. Residue E280 participates in Mg(2+) binding.

The protein belongs to the FBPase class 1 family. In terms of assembly, homotetramer. The cofactor is Mg(2+).

The protein localises to the cytoplasm. The catalysed reaction is beta-D-fructose 1,6-bisphosphate + H2O = beta-D-fructose 6-phosphate + phosphate. It functions in the pathway carbohydrate biosynthesis; gluconeogenesis. This is Fructose-1,6-bisphosphatase class 1 from Teredinibacter turnerae (strain ATCC 39867 / T7901).